We begin with the raw amino-acid sequence, 123 residues long: Small ribosomal subunit protein uS13 (123 aa).

The segment at 93–123 (RRNLPVRGQKTKTNARTRKGPKRAIGGKKKK) is disordered.

The protein belongs to the universal ribosomal protein uS13 family. Part of the 30S ribosomal subunit. Forms a loose heterodimer with protein S19. Forms two bridges to the 50S subunit in the 70S ribosome.

In terms of biological role, located at the top of the head of the 30S subunit, it contacts several helices of the 16S rRNA. In the 70S ribosome it contacts the 23S rRNA (bridge B1a) and protein L5 of the 50S subunit (bridge B1b), connecting the 2 subunits; these bridges are implicated in subunit movement. Contacts the tRNAs in the A and P-sites. The sequence is that of Small ribosomal subunit protein uS13 from Clostridium botulinum (strain Kyoto / Type A2).